The sequence spans 977 residues: Leucine--tRNA ligase (977 aa).

Residues 11-21 (PYVNGYLHLGH) carry the 'HIGH' region motif. Residues 220–318 (VFYVYELYSL…EYYNTKVETQ (99 aa)) form an insert region. A 'KMSKS' region motif is present at residues 699 to 703 (KMSKS). Residue K702 participates in ATP binding.

Belongs to the class-I aminoacyl-tRNA synthetase family.

It localises to the cytoplasm. It carries out the reaction tRNA(Leu) + L-leucine + ATP = L-leucyl-tRNA(Leu) + AMP + diphosphate. In Nanoarchaeum equitans (strain Kin4-M), this protein is Leucine--tRNA ligase (leuS).